We begin with the raw amino-acid sequence, 102 residues long: Small ribosomal subunit protein uS10 (102 aa).

This sequence belongs to the universal ribosomal protein uS10 family. As to quaternary structure, part of the 30S ribosomal subunit.

Its function is as follows. Involved in the binding of tRNA to the ribosomes. The sequence is that of Small ribosomal subunit protein uS10 (rpsJ) from Bacillus subtilis (strain 168).